We begin with the raw amino-acid sequence, 836 residues long: Pentatricopeptide repeat-containing protein At1g79490, mitochondrial (836 aa).

Residues 1–85 (MIRGRTAKVI…QCRSIVRRFC (85 aa)) constitute a mitochondrion transit peptide. PPR repeat units follow at residues 204–238 (SDECYVVLFDGLNQGRDFVGIQSLFEEMVQDSSSH), 242–276 (SFNAYNQVIQYLAKAEKLEVAFCCFKKAQESGCKI), 277–311 (DTQTYNNLMMLFLNKGLPYKAFEIYESMEKTDSLL), 312–346 (DGSTYELIIPSLAKSGRLDAAFKLFQQMKERKLRP), 347–381 (SFSVFSSLVDSMGKAGRLDTSMKVYMEMQGFGHRP), 382–416 (SATMFVSLIDSYAKAGKLDTALRLWDEMKKSGFRP), 417–451 (NFGLYTMIIESHAKSGKLEVAMTVFKDMEKAGFLP), 452–486 (TPSTYSCLLEMHAGSGQVDSAMKIYNSMTNAGLRP), 487–521 (GLSSYISLLTLLANKRLVDVAGKILLEMKAMGYSV), 528–555 (VLMIYIKDASVDLALKWLRFMGSSGIKT), 556–590 (NNFIIRQLFESCMKNGLYDSARPLLETLVHSAGKV), and 591–625 (DLVLYTSILAHLVRCQDEDKERQLMSILSATKHKA). Residues 710–786 (LDVRNLSVGA…APGELVMEWF (77 aa)) enclose the Smr domain.

The protein belongs to the PPR family. P subfamily.

The protein localises to the mitochondrion. The chain is Pentatricopeptide repeat-containing protein At1g79490, mitochondrial (EMB2217) from Arabidopsis thaliana (Mouse-ear cress).